The chain runs to 336 residues: MEKIYSAPITVLGAGSYGTALAIALSRNGHKTYLWGHNPQKMAQMAVRRMSEEFLPDIPFPEALEIESDLATALTRSKDILIVVPSHVFSEVLQQIQPLLTSEHRIMWATKGLERDTGRLLQEVALQILGDRYPLAVLSGPTFAKELAQGLPTAIALSSTDPQFADEMQQRIHCSKAFRVYLNSDMVGVQLGGAIKNVIAIGTGISDGMGFGANARTALITRGLAEISRLGLSLGANPTTFIGMAGLGDLVLTCTDNQSRNRRFGLMLGQGRNAQEAMAEIGQVVEGFYNTKEAYLLAQKQGIEMPIVEQIYQILFCGKHASDVAKTLLGRERKGE.

4 residues coordinate NADPH: S16, Y17, H37, and K111. The sn-glycerol 3-phosphate site is built by K111, G140, and T142. A144 provides a ligand contact to NADPH. The sn-glycerol 3-phosphate site is built by K196, D249, S259, R260, and N261. The active-site Proton acceptor is K196. NADPH is bound at residue R260. The NADPH site is built by V284 and E286.

It belongs to the NAD-dependent glycerol-3-phosphate dehydrogenase family.

It is found in the cytoplasm. It carries out the reaction sn-glycerol 3-phosphate + NAD(+) = dihydroxyacetone phosphate + NADH + H(+). The catalysed reaction is sn-glycerol 3-phosphate + NADP(+) = dihydroxyacetone phosphate + NADPH + H(+). It participates in membrane lipid metabolism; glycerophospholipid metabolism. Its function is as follows. Catalyzes the reduction of the glycolytic intermediate dihydroxyacetone phosphate (DHAP) to sn-glycerol 3-phosphate (G3P), the key precursor for phospholipid synthesis. This chain is Glycerol-3-phosphate dehydrogenase [NAD(P)+], found in Glaesserella parasuis serovar 5 (strain SH0165) (Haemophilus parasuis).